The chain runs to 150 residues: MKQTTLIAAKDIKKNWYIVDAAGQNVGRLSTEVARILRGKHKVDFTPHMNNGDHVIIINAEKVLFTGKKESDKTYYHHSMHPGGLRRRTVAVQRELDATKILERSIRLMLPKNVQGRNQFRALHVFVGENHPYAAQKPEVLTFVKKGDNK.

Belongs to the universal ribosomal protein uL13 family. Part of the 50S ribosomal subunit.

Its function is as follows. This protein is one of the early assembly proteins of the 50S ribosomal subunit, although it is not seen to bind rRNA by itself. It is important during the early stages of 50S assembly. This chain is Large ribosomal subunit protein uL13, found in Mesoplasma florum (strain ATCC 33453 / NBRC 100688 / NCTC 11704 / L1) (Acholeplasma florum).